The sequence spans 38 residues: Small toxic protein BsrG (38 aa).

The chain crosses the membrane as a helical span at residues 11 to 31 (INFGGLILNTVLLIFNIMMIV).

It is found in the cell membrane. Its function is as follows. Toxic component of a type I toxin-antitoxin (TA) system; expression in the absence of cognate antisense antitoxin SR4 RNA leads to cell lysis. Induced expression causes membrane invaginations that dislocate the cell wall synthesis machinery, leading to eventual death. Unlike many type I TA systems it does not form pores. Base pairing occurs between the 3' UTRs of bsrG mRNA and SR4 RNA, which leads to initiation of degradation by RNase III (rnc) followed by the action of RNase Y (rny) and RNase R (rnr). Not toxic when expressed in E.coli. When induced during logarithmic growth it only slowly exerts its toxic effect. Expression during log growth leads to significant disturbances of cell envelope biosynthesis and cell morphology, causing cell membrane invaginations and delocalization of cell division and cell wall synthesis machinery. Cell lysis depends on mreB, lytC and lytD, suggesting expression of bsrG triggers autolysis rather than disintegration of the membrane. Additionally expression of bsrG also inhibits transcription. The chain is Small toxic protein BsrG from Bacillus subtilis (strain 168).